The primary structure comprises 116 residues: Putative pterin-4-alpha-carbinolamine dehydratase (116 aa).

The protein belongs to the pterin-4-alpha-carbinolamine dehydratase family.

The enzyme catalyses (4aS,6R)-4a-hydroxy-L-erythro-5,6,7,8-tetrahydrobiopterin = (6R)-L-erythro-6,7-dihydrobiopterin + H2O. The protein is Putative pterin-4-alpha-carbinolamine dehydratase of Stenotrophomonas maltophilia (strain K279a).